Consider the following 194-residue polypeptide: MRLCDTDIERYLDDGIIALTPRPSNDKINGATIDVRLGNSFRVFREHSAPYIDLSGPKEQVSAQLESVMSEEILIGENDAFFLHPGELALATTLESVKLPANIIGWLDGRSSLARLGLMVHVTAHRIDPGWEGRIVLEFFNSGKLPLALRPNMVIGALSFEILSGYAARPYSSRKNAKYKNQQSAVASRIDEDK.

Residues 110–115 (RSSLAR), aspartate 128, 136–138 (VLE), tyrosine 171, lysine 178, and glutamine 182 each bind dCTP. The active-site Proton donor/acceptor is glutamate 138.

The protein belongs to the dCTP deaminase family. In terms of assembly, homotrimer.

The catalysed reaction is dCTP + H2O + H(+) = dUTP + NH4(+). Its pathway is pyrimidine metabolism; dUMP biosynthesis; dUMP from dCTP (dUTP route): step 1/2. Catalyzes the deamination of dCTP to dUTP. The chain is dCTP deaminase from Pasteurella multocida (strain Pm70).